We begin with the raw amino-acid sequence, 92 residues long: Acylphosphatase (92 aa).

Residues 5-92 (CIAAYVYGVV…TPFETFKIRY (88 aa)) enclose the Acylphosphatase-like domain. Catalysis depends on residues Arg-20 and Asn-38.

This sequence belongs to the acylphosphatase family.

It carries out the reaction an acyl phosphate + H2O = a carboxylate + phosphate + H(+). The protein is Acylphosphatase (acyP) of Yersinia enterocolitica serotype O:8 / biotype 1B (strain NCTC 13174 / 8081).